A 730-amino-acid chain; its full sequence is Ribosomal RNA large subunit methyltransferase K/L (730 aa).

The 112-residue stretch at 46 to 157 (TAYRLCLWSR…RGEAILSLDL (112 aa)) folds into the THUMP domain.

Belongs to the methyltransferase superfamily. RlmKL family.

The protein resides in the cytoplasm. It catalyses the reaction guanosine(2445) in 23S rRNA + S-adenosyl-L-methionine = N(2)-methylguanosine(2445) in 23S rRNA + S-adenosyl-L-homocysteine + H(+). The catalysed reaction is guanosine(2069) in 23S rRNA + S-adenosyl-L-methionine = N(2)-methylguanosine(2069) in 23S rRNA + S-adenosyl-L-homocysteine + H(+). Functionally, specifically methylates the guanine in position 2445 (m2G2445) and the guanine in position 2069 (m7G2069) of 23S rRNA. This chain is Ribosomal RNA large subunit methyltransferase K/L, found in Pseudomonas putida (strain W619).